A 378-amino-acid chain; its full sequence is UPF0754 membrane protein BCG9842_B4423 (378 aa).

The chain crosses the membrane as a helical span at residues 357–377; that stretch reads YLGALLGGIIGLVQGLLLLFL.

This sequence belongs to the UPF0754 family.

The protein localises to the cell membrane. The protein is UPF0754 membrane protein BCG9842_B4423 of Bacillus cereus (strain G9842).